We begin with the raw amino-acid sequence, 56 residues long: Venom peptide 5 (56 aa).

Positions 1-26 (MKTASFILSFVVLLIVIITWIGEVSA) are cleaved as a signal peptide. The propeptide occupies 27 to 42 (VSEPEPVAKATAHAAA). Cysteine 49 and cysteine 54 are joined by a disulfide.

Probably contains 1 disulfide bond, which may be crucial for activity, since the linear peptide without disulfide bond is inactive. In terms of tissue distribution, expressed by the venom gland.

It localises to the secreted. The protein is Venom peptide 5 of Eumenes pomiformis (Potter wasp).